The following is a 255-amino-acid chain: Small ribosomal subunit protein eS1B (255 aa).

A2 carries the post-translational modification N-acetylalanine; partial. At S245 the chain carries Phosphoserine. K248 is covalently cross-linked (Glycyl lysine isopeptide (Lys-Gly) (interchain with G-Cter in ubiquitin)). T254 bears the Phosphothreonine mark.

Belongs to the eukaryotic ribosomal protein eS1 family. In terms of assembly, component of the small ribosomal subunit. Mature ribosomes consist of a small (40S) and a large (60S) subunit. The 40S subunit contains about 33 different proteins and 1 molecule of RNA (18S). The 60S subunit contains about 49 different proteins and 3 molecules of RNA (25S, 5.8S and 5S).

The protein resides in the cytoplasm. The polypeptide is Small ribosomal subunit protein eS1B (Saccharomyces cerevisiae (strain JAY291) (Baker's yeast)).